We begin with the raw amino-acid sequence, 386 residues long: GLABROUS1 enhancer-binding protein-like 1 (386 aa).

Disordered stretches follow at residues 1–58 (MVTP…KKKK) and 197–314 (ESGE…DDDD). The segment covering 216-226 (EEIRDNDETAR) has biased composition (basic and acidic residues). Positions 221–285 (NDETARKAQQ…LKEHEEVANT (65 aa)) form a coiled coil. Over residues 257-267 (DNNGTTQIAQQ) the composition is skewed to polar residues. A compositionally biased stretch (low complexity) spans 291–300 (NGAAKTTENG). Residues 354–375 (LSDEWKALCVEERRLNIKKLRF) are non-canonical leucine-zipper.

The protein belongs to the GeBP family. Homo- and heterodimers. Interacts with GEBP, GPL2 and GPL3. Interacts with GEBP. In terms of tissue distribution, expressed in the apical meristem and young leaf primordia. Detected in the vascular tissues of cotyledons and leaves, in hydathodes and at the base of flowers and siliques, but not in roots.

Its subcellular location is the nucleus. In terms of biological role, probable transcription factor. May play redundant roles with GEBP and GPL2 in cytokinin responses by regulating the transcript levels of type-A ARR response genes. Involved in stress responses. Plays a repressive role in cell expansion by counteracting the positive role of CPR5 in this process, but does not regulate cell proliferation or endoreduplication. In Arabidopsis thaliana (Mouse-ear cress), this protein is GLABROUS1 enhancer-binding protein-like 1.